We begin with the raw amino-acid sequence, 505 residues long: Flagellin (505 aa).

Belongs to the bacterial flagellin family.

Its subcellular location is the secreted. The protein resides in the bacterial flagellum. Flagellin is the subunit protein which polymerizes to form the filaments of bacterial flagella. This Salmonella enteritidis protein is Flagellin (fliC).